Consider the following 354-residue polypeptide: Uroporphyrinogen decarboxylase (354 aa).

Residues 35 to 39 (RQAGR), Asp84, Tyr159, Ser214, and His333 each bind substrate.

The protein belongs to the uroporphyrinogen decarboxylase family. In terms of assembly, homodimer.

Its subcellular location is the cytoplasm. It carries out the reaction uroporphyrinogen III + 4 H(+) = coproporphyrinogen III + 4 CO2. It participates in porphyrin-containing compound metabolism; protoporphyrin-IX biosynthesis; coproporphyrinogen-III from 5-aminolevulinate: step 4/4. Its function is as follows. Catalyzes the decarboxylation of four acetate groups of uroporphyrinogen-III to yield coproporphyrinogen-III. The protein is Uroporphyrinogen decarboxylase of Nocardia farcinica (strain IFM 10152).